We begin with the raw amino-acid sequence, 663 residues long: 4-hydroxy-3-methylbut-2-en-1-yl diphosphate synthase (flavodoxin) (663 aa).

The [4Fe-4S] cluster site is built by Cys568, Cys571, Cys602, and Glu609.

The protein belongs to the IspG family. [4Fe-4S] cluster is required as a cofactor.

It catalyses the reaction (2E)-4-hydroxy-3-methylbut-2-enyl diphosphate + oxidized [flavodoxin] + H2O + 2 H(+) = 2-C-methyl-D-erythritol 2,4-cyclic diphosphate + reduced [flavodoxin]. It functions in the pathway isoprenoid biosynthesis; isopentenyl diphosphate biosynthesis via DXP pathway; isopentenyl diphosphate from 1-deoxy-D-xylulose 5-phosphate: step 5/6. Its function is as follows. Converts 2C-methyl-D-erythritol 2,4-cyclodiphosphate (ME-2,4cPP) into 1-hydroxy-2-methyl-2-(E)-butenyl 4-diphosphate. In Leptospira interrogans serogroup Icterohaemorrhagiae serovar copenhageni (strain Fiocruz L1-130), this protein is 4-hydroxy-3-methylbut-2-en-1-yl diphosphate synthase (flavodoxin).